Consider the following 902-residue polypeptide: Nitrate reductase [NADPH] (902 aa).

Position 182 (cysteine 182) interacts with Mo-molybdopterin. The Cytochrome b5 heme-binding domain maps to 537–612; the sequence is LPLIFADEVA…LKKYCIGRCS (76 aa). Residues histidine 572 and histidine 595 each coordinate heme. The FAD-binding FR-type domain occupies 637-751; the sequence is RTKVPIVLIS…KGPLGHFTYY (115 aa). FAD-binding positions include 689 to 692, 708 to 712, phenylalanine 713, 725 to 727, and threonine 778; these read RAYT, LIKVY, and LFS. 872–879 provides a ligand contact to NADP(+); it reads CMCGPEGM.

It belongs to the nitrate reductase family. In terms of assembly, homodimer. FAD serves as cofactor. Requires heme as cofactor. Mo-molybdopterin is required as a cofactor.

It carries out the reaction nitrite + NADP(+) + H2O = nitrate + NADPH + H(+). Functionally, nitrate reductase is a key enzyme involved in the first step of nitrate assimilation in plants, fungi and bacteria. This is Nitrate reductase [NADPH] (NIAA) from Phytophthora infestans (Potato late blight agent).